We begin with the raw amino-acid sequence, 79 residues long: Phosphoribosylformylglycinamidine synthase subunit PurS (79 aa).

This sequence belongs to the PurS family. As to quaternary structure, homodimer. Part of the FGAM synthase complex composed of 1 PurL, 1 PurQ and 2 PurS subunits.

The protein localises to the cytoplasm. It carries out the reaction N(2)-formyl-N(1)-(5-phospho-beta-D-ribosyl)glycinamide + L-glutamine + ATP + H2O = 2-formamido-N(1)-(5-O-phospho-beta-D-ribosyl)acetamidine + L-glutamate + ADP + phosphate + H(+). It functions in the pathway purine metabolism; IMP biosynthesis via de novo pathway; 5-amino-1-(5-phospho-D-ribosyl)imidazole from N(2)-formyl-N(1)-(5-phospho-D-ribosyl)glycinamide: step 1/2. Part of the phosphoribosylformylglycinamidine synthase complex involved in the purines biosynthetic pathway. Catalyzes the ATP-dependent conversion of formylglycinamide ribonucleotide (FGAR) and glutamine to yield formylglycinamidine ribonucleotide (FGAM) and glutamate. The FGAM synthase complex is composed of three subunits. PurQ produces an ammonia molecule by converting glutamine to glutamate. PurL transfers the ammonia molecule to FGAR to form FGAM in an ATP-dependent manner. PurS interacts with PurQ and PurL and is thought to assist in the transfer of the ammonia molecule from PurQ to PurL. This chain is Phosphoribosylformylglycinamidine synthase subunit PurS, found in Mycobacterium leprae (strain TN).